Consider the following 153-residue polypeptide: Cytochrome c-type biogenesis protein CcmE (153 aa).

Topologically, residues 1–8 (MTPVQRRR) are cytoplasmic. Residues 9 to 29 (LAWVLLALLASGLATALVAMA) traverse the membrane as a helical; Signal-anchor for type II membrane protein segment. At 30-153 (LERNIAYLYT…DVPVTAPEVR (124 aa)) the chain is on the extracellular side. Positions 123 and 127 each coordinate heme.

It belongs to the CcmE/CycJ family.

Its subcellular location is the cell membrane. Functionally, heme chaperone required for the biogenesis of c-type cytochromes. Transiently binds heme delivered by CcmC and transfers the heme to apo-cytochromes in a process facilitated by CcmF and CcmH. In Stenotrophomonas maltophilia (strain K279a), this protein is Cytochrome c-type biogenesis protein CcmE.